The primary structure comprises 468 residues: MCDLIEPQPAEKIGKMKKLRRTLSESFSRIVLNVISFVFQICVTKMSTRNCQGMDSVIKPLDTIPEDKKVRVQRTQSTFDPFEKPTNQVKRVHSENNACINFKSSSAGKESPKVRRHSSPSSPTSPKFGKADSYEKLEKLGEGSYATVYKGKSKVNGKLVALKVIRLQEEEGTPFTAIREASLLKGLKHANIVLLHDIIHTKETLTLVFEYVHTDLCQYMDKHPGGLHPENVKLFLFQLLRGLSYIHQRYILHRDLKPQNLLISDTGELKLADFGLARAKSVPSHTYSNEVVTLWYRPPDVLLGSTEYSTCLDMWGVGCIFVEMIQGVAAFPGMKDIQDQLERIFLVLGTPNEDTWPGVHSLPHFKPERFTLYSSKNLRQAWNKLSYVNHAEDLASKLLQCSPKNRLSAQAALSHEYFSDLPPRLWELTDMSSIFTVPNVRLQPESGESMRAFGKNSSYGKSLSNSKH.

Phosphoserine is present on residues serine 24, serine 77, and serine 94. Positions 102 to 131 are disordered; it reads FKSSSAGKESPKVRRHSSPSSPTSPKFGKA. Position 133 is a phosphoserine (serine 133). The Protein kinase domain maps to 134 to 418; it reads YEKLEKLGEG…AQAALSHEYF (285 aa). ATP-binding positions include 140–148 and lysine 163; that span reads LGEGSYATV. Catalysis depends on aspartate 255, which acts as the Proton acceptor. A disordered region spans residues 448 to 468; the sequence is ESMRAFGKNSSYGKSLSNSKH. A compositionally biased stretch (polar residues) spans 455-468; that stretch reads KNSSYGKSLSNSKH.

It belongs to the protein kinase superfamily. CMGC Ser/Thr protein kinase family. CDC2/CDKX subfamily. Found in a complex with LRP6, CCNY and CAPRIN2 during G2/M stage; CAPRIN2 functions as a scaffold for the complex by binding to CCNY via its N terminus and to CDK14 via its C terminus. Interacts with CCNY; CCNY mediates its recruitment to the plasma membrane and promotes phosphorylation of LRP6. Interacts with CCDN3 and CDKN1A. Interacts with SEPT8. Interacts with 14-3-3 proteina YWHAB, YWHAE, YWHAH and YWHAQ.

The protein localises to the cell membrane. It localises to the cytoplasm. Its subcellular location is the nucleus. It carries out the reaction L-seryl-[protein] + ATP = O-phospho-L-seryl-[protein] + ADP + H(+). It catalyses the reaction L-threonyl-[protein] + ATP = O-phospho-L-threonyl-[protein] + ADP + H(+). Its activity is regulated as follows. Serine/threonine-protein kinase activity is promoted by associated cyclins CCDN3 and CCNY and repressed by CDKN1A. Functionally, serine/threonine-protein kinase involved in the control of the eukaryotic cell cycle, whose activity is controlled by an associated cyclin. Acts as a cell-cycle regulator of Wnt signaling pathway during G2/M phase by mediating the phosphorylation of LRP6 at 'Ser-1490', leading to the activation of the Wnt signaling pathway. Acts as a regulator of cell cycle progression and cell proliferation via its interaction with CCDN3. Phosphorylates RB1 in vitro, however the relevance of such result remains to be confirmed in vivo. May also play a role in meiosis, neuron differentiation and may indirectly act as a negative regulator of insulin-responsive glucose transport. This Oryctolagus cuniculus (Rabbit) protein is Cyclin-dependent kinase 14 (CDK14).